The sequence spans 113 residues: AQVMLMAVALVLMLAAVPRAAVAIDCGHVDSLVRPCLSYVQGGPGPSGQCCDGVKNLHNQARSQSDRQSACNCLKGIARGIHNLNEDNARSIPPKCGVNLPYTISLNIDCSRV.

Positions 1 to 24 (AQVMLMAVALVLMLAAVPRAAVAI) are cleaved as a signal peptide. Cystine bridges form between C26–C73, C36–C50, C51–C96, and C71–C110. D30 carries Cis-14-hydroxy-10,13-dioxo-7-heptadecenoic acid aspartate ester lipidation.

This sequence belongs to the plant LTP family.

In terms of biological role, plant non-specific lipid-transfer proteins transfer phospholipids as well as galactolipids across membranes. May play a role in wax or cutin deposition in the cell walls of expanding epidermal cells and certain secretory tissues. The protein is Non-specific lipid-transfer protein of Triticum aestivum (Wheat).